Consider the following 82-residue polypeptide: Sec-independent protein translocase protein TatA (82 aa).

A helical membrane pass occupies residues 1–21; that stretch reads MGIFDWKHWIVILIVVVLVFG. A disordered region spans residues 43–82; that stretch reads VNTEEDDKKDQPAAQPAQPLNQPHTIDAQAQKVEEPARKD.

The protein belongs to the TatA/E family. The Tat system comprises two distinct complexes: a TatABC complex, containing multiple copies of TatA, TatB and TatC subunits, and a separate TatA complex, containing only TatA subunits. Substrates initially bind to the TatABC complex, which probably triggers association of the separate TatA complex to form the active translocon.

It is found in the cell inner membrane. Functionally, part of the twin-arginine translocation (Tat) system that transports large folded proteins containing a characteristic twin-arginine motif in their signal peptide across membranes. TatA could form the protein-conducting channel of the Tat system. This is Sec-independent protein translocase protein TatA from Pseudomonas aeruginosa (strain LESB58).